Consider the following 111-residue polypeptide: Disintegrin subunit alpha (111 aa).

The N-terminal stretch at 1 to 20 is a signal peptide; the sequence is MIQVLLVTICLAVFPYQGSS. A propeptide spanning residues 21–44 is cleaved from the precursor; it reads IILESGNVNDYEVVYPRKITPLPK. The 67-residue stretch at 45 to 111 folds into the Disintegrin domain; the sequence is GAVQPKNPCC…GDCPRKHFYA (67 aa). 4 disulfides stabilise this stretch: C53–C76, C67–C73, C72–C97, and C85–C104. The short motif at 89 to 91 is the Cell attachment site element; it reads RGD. The propeptide occupies 110 to 111; it reads YA.

The protein belongs to the disintegrin family. Dimeric disintegrin subfamily. Heterodimer with subunit beta; disulfide-linked. Expressed by the venom gland.

It is found in the secreted. In terms of biological role, acts by binding to alpha-IIb/beta-3 (ITGA2B/ITGB3) on the platelet surface and inhibits both ADP-induced platelet aggregation and platelet aggregate dissociation in human platelet-rich plasma. This chain is Disintegrin subunit alpha, found in Agkistrodon piscivorus leucostoma (Western cottonmouth).